The chain runs to 444 residues: Acyl-CoA (8-3)-desaturase (444 aa).

Met-1 is modified (N-acetylmethionine). Topologically, residues 1-121 are cytoplasmic; that stretch reads MAPDPVAAET…FRELRATVER (121 aa). A Cytochrome b5 heme-binding domain is found at 17–94; that stretch reads PRYFTWDEVA…MNSLLIGELS (78 aa). The helical transmembrane segment at 122–142 threads the bilayer; it reads MGLMKANHVFFLLYLLHILLL. At 143 to 145 the chain is on the lumenal side; it reads DGA. The helical transmembrane segment at 146–170 threads the bilayer; that stretch reads AWLTLWVFGTSFLPFLLCAVLLSAV. Residues 171 to 267 are Cytoplasmic-facing; that stretch reads QAQAGWLQHD…PYNHQHKYFF (97 aa). The short motif at 179–183 is the Histidine box-1 element; the sequence is HDFGH. A Histidine box-2 motif is present at residues 216-220; that stretch reads HFQHH. A helical membrane pass occupies residues 268–288; the sequence is LIGPPALLPLYFQWYIFYFVI. The Lumenal segment spans residues 289–305; that stretch reads QRKKWVDLAWMITFYVR. The helical transmembrane segment at 306 to 326 threads the bilayer; it reads FFLTYVPLLGLKAFLGLFFIV. At 327-444 the chain is on the cytoplasmic side; sequence RFLESNWFVW…QLWLDAYLHQ (118 aa). Positions 382 to 386 match the Histidine box-3 motif; that stretch reads QIEHH.

This sequence belongs to the fatty acid desaturase type 1 family. In terms of tissue distribution, widely expressed, with highest levels in liver, brain, adrenal gland and heart. Highly expressed in fetal liver and brain.

Its subcellular location is the endoplasmic reticulum membrane. It is found in the mitochondrion. The catalysed reaction is (8Z,11Z,14Z)-eicosatrienoyl-CoA + 2 Fe(II)-[cytochrome b5] + O2 + 2 H(+) = (5Z,8Z,11Z,14Z)-eicosatetraenoyl-CoA + 2 Fe(III)-[cytochrome b5] + 2 H2O. The enzyme catalyses (8Z,11Z,14Z,17Z)-eicosatetraenoyl-CoA + 2 Fe(II)-[cytochrome b5] + O2 + 2 H(+) = (5Z,8Z,11Z,14Z,17Z)-eicosapentaenoyl-CoA + 2 Fe(III)-[cytochrome b5] + 2 H2O. It catalyses the reaction (11E)-octadecenoyl-CoA + 2 Fe(II)-[cytochrome b5] + O2 + 2 H(+) = (5Z,11E)-octadecadienoyl-CoA + 2 Fe(III)-[cytochrome b5] + 2 H2O. The protein operates within lipid metabolism; polyunsaturated fatty acid biosynthesis. Acts as a front-end fatty acyl-coenzyme A (CoA) desaturase that introduces a cis double bond at carbon 5 located between a preexisting double bond and the carboxyl end of the fatty acyl chain. Involved in biosynthesis of highly unsaturated fatty acids (HUFA) from the essential polyunsaturated fatty acids (PUFA) linoleic acid (LA) (18:2n-6) and alpha-linolenic acid (ALA) (18:3n-3) precursors. Specifically, desaturates dihomo-gamma-linoleoate (DGLA) (20:3n-6) and eicosatetraenoate (ETA) (20:4n-3) to generate arachidonate (AA) (20:4n-6) and eicosapentaenoate (EPA) (20:5n-3), respectively. As a rate limiting enzyme for DGLA (20:3n-6) and AA (20:4n-6)-derived eicosanoid biosynthesis, controls the metabolism of inflammatory lipids like prostaglandin E2, critical for efficient acute inflammatory response and maintenance of epithelium homeostasis. Contributes to membrane phospholipid biosynthesis by providing AA (20:4n-6) as a major acyl chain esterified into phospholipids. In particular, regulates phosphatidylinositol-4,5-bisphosphate levels, modulating inflammatory cytokine production in T-cells. Also desaturates (11E)-octadecenoate (trans-vaccenoate)(18:1n-9), a metabolite in the biohydrogenation pathway of LA (18:2n-6). Its function is as follows. Does not exhibit any catalytic activity toward 20:3n-6, but it may enhance FADS2 activity. The chain is Acyl-CoA (8-3)-desaturase from Homo sapiens (Human).